Consider the following 555-residue polypeptide: Capsid vertex component 2 (555 aa).

An interaction with major capsid protein/MCP region spans residues 1-47 (MAQCNLFYQYPITPILEGHVRNILICTEEDIRRLQSQSSLRLREKID).

This sequence belongs to the herpesviridae CVC2 protein family. In terms of assembly, heterodimerizes with CVC1. Interacts with major capsid protein/MCP and triplex capsid protein 1/TRX1 at the pentamer vertices. Interacts with the large tegument protein/LTP.

It is found in the virion. The protein resides in the host nucleus. Its function is as follows. Capsid vertex-specific component that plays a role during viral DNA encapsidation, assuring correct genome cleavage and presumably stabilizing capsids that contain full-length viral genomes. Participates in the interaction between the capsid and the tegument through interaction with the large tegument protein/LTP. The protein is Capsid vertex component 2 of Homo sapiens (Human).